Consider the following 1082-residue polypeptide: Protein argonaute 1A (1082 aa).

Disordered stretches follow at residues M17–D148 and G187–P208. The segment covering G29–T38 has biased composition (polar residues). The span at G72–P100 shows a compositional bias: gly residues. The region spanning P420–E533 is the PAZ domain. Residues L709–E1030 enclose the Piwi domain. The interval S1036 to V1065 is disordered.

Belongs to the argonaute family. Ago subfamily.

In terms of biological role, probably involved in the RNA silencing pathway. May bind to short RNAs such as microRNAs (miRNAs) or short interfering RNAs (siRNAs), and represses the translation of mRNAs which are complementary to them. This is Protein argonaute 1A (AGO1A) from Oryza sativa subsp. japonica (Rice).